The sequence spans 486 residues: UDP-N-acetylmuramate--L-alanine ligase (486 aa).

Residue 126 to 132 (GTHGKTT) coordinates ATP.

This sequence belongs to the MurCDEF family.

The protein localises to the cytoplasm. It catalyses the reaction UDP-N-acetyl-alpha-D-muramate + L-alanine + ATP = UDP-N-acetyl-alpha-D-muramoyl-L-alanine + ADP + phosphate + H(+). It functions in the pathway cell wall biogenesis; peptidoglycan biosynthesis. Its function is as follows. Cell wall formation. The protein is UDP-N-acetylmuramate--L-alanine ligase of Pectobacterium carotovorum subsp. carotovorum (strain PC1).